The sequence spans 415 residues: Cyclin-A2 (415 aa).

Belongs to the cyclin family. Cyclin AB subfamily. As to quaternary structure, interacts with the CDK1 and CDK2 protein kinases to form serine/threonine kinase holoenzyme complexes. As to expression, ubiquitous.

The protein resides in the nucleus. The protein localises to the cytoplasm. Functionally, cyclin which controls both the G1/S and the G2/M transition phases of the cell cycle. Functions through the formation of specific serine/threonine kinase holoenzyme complexes with the cyclin-dependent protein kinases CDK1 and CDK2. The cyclin subunit confers the substrate specificity of these complexes and differentially interacts with and activates CDK1 and CDK2 throughout the cell cycle. In Xenopus laevis (African clawed frog), this protein is Cyclin-A2 (ccna2).